We begin with the raw amino-acid sequence, 159 residues long: Regulatory protein RecX (159 aa).

The protein belongs to the RecX family.

It is found in the cytoplasm. In terms of biological role, modulates RecA activity. This Acinetobacter baylyi (strain ATCC 33305 / BD413 / ADP1) protein is Regulatory protein RecX.